The sequence spans 38 residues: Augerpeptide hhe53 (38 aa).

Post-translationally, contains 2 disulfide bonds. As to expression, expressed by the venom duct.

The protein resides in the secreted. The chain is Augerpeptide hhe53 from Hastula hectica (Sea snail).